Reading from the N-terminus, the 94-residue chain is Large ribosomal subunit protein bL25 (94 aa).

Belongs to the bacterial ribosomal protein bL25 family. In terms of assembly, part of the 50S ribosomal subunit; part of the 5S rRNA/L5/L18/L25 subcomplex. Contacts the 5S rRNA. Binds to the 5S rRNA independently of L5 and L18.

This is one of the proteins that binds to the 5S RNA in the ribosome where it forms part of the central protuberance. The chain is Large ribosomal subunit protein bL25 from Edwardsiella ictaluri (strain 93-146).